The primary structure comprises 70 residues: uncharacterized protein (70 aa).

It localises to the plastid. The protein localises to the chloroplast. This is an uncharacterized protein from Mesostigma viride (Green alga).